A 63-amino-acid polypeptide reads, in one-letter code: Small ribosomal subunit protein eS17 (63 aa).

This sequence belongs to the eukaryotic ribosomal protein eS17 family.

This chain is Small ribosomal subunit protein eS17, found in Methanococcus vannielii (strain ATCC 35089 / DSM 1224 / JCM 13029 / OCM 148 / SB).